Consider the following 53-residue polypeptide: MKFFTVLFFLLSIIYLIVAAPGEPGAPIDYDEYGDSSEEVGGTPLHEIPGIRL.

The signal sequence occupies residues 1–21 (MKFFTVLFFLLSIIYLIVAAP).

In terms of tissue distribution, expressed at high levels in salivary glands and midguts of adult tsetse flies.

Its subcellular location is the secreted. Functionally, potent and specific inhibitor of human thrombin. It is also a potent inhibitor of thrombin-induced platelet aggregation. It is capable of antagonizing host hemostasis and facilitating blood feeding. The polypeptide is Tsetse thrombin inhibitor (TTI) (Glossina morsitans morsitans (Savannah tsetse fly)).